Reading from the N-terminus, the 506-residue chain is Galactose/methyl galactoside import ATP-binding protein MglA (506 aa).

ABC transporter domains lie at 14–249 and 264–506; these read LTMT…VGRE and VILE…AKYL. Residue 46–53 coordinates ATP; it reads GENGAGKS.

Belongs to the ABC transporter superfamily. Galactose/methyl galactoside importer (TC 3.A.1.2.3) family. In terms of assembly, the complex is composed of one ATP-binding protein (MglA), two transmembrane proteins (MglC) and a solute-binding protein (MglB).

The protein resides in the cell inner membrane. It carries out the reaction D-galactose(out) + ATP + H2O = D-galactose(in) + ADP + phosphate + H(+). The catalysed reaction is methyl beta-D-galactoside(out) + ATP + H2O = methyl beta-D-galactoside(in) + ADP + phosphate + H(+). Functionally, part of the ABC transporter complex MglABC involved in galactose/methyl galactoside import. Responsible for energy coupling to the transport system. This is Galactose/methyl galactoside import ATP-binding protein MglA from Mannheimia succiniciproducens (strain KCTC 0769BP / MBEL55E).